Here is a 229-residue protein sequence, read N- to C-terminus: Secretory carrier-associated membrane protein 4 (229 aa).

The Cytoplasmic portion of the chain corresponds to 1–39 (MSEKENNFPPLPKFIPVKPCFYQNFSDEIPVEHQVLVKR). The next 4 membrane-spanning stretches (helical) occupy residues 40–60 (IYRLWMFYCATLGVNLIACLA), 61–81 (WWIGGGSGTNFGLAFVWLLLF), 105–125 (FMAFFFIFGAQFVLTVIQAIG), and 149–169 (VVMLLPAIMFSVSAAMMAIAI). At 170 to 229 (MKVHRIYRGAGGSFQKAQTEWNTGTWRNPPSREAQYNNFSGNSLPEYPTVPSYPGSGQWP) the chain is on the cytoplasmic side. Thr194 carries the phosphothreonine modification. A disordered region spans residues 208-229 (FSGNSLPEYPTVPSYPGSGQWP).

It belongs to the SCAMP family.

The protein localises to the membrane. Its function is as follows. Probably involved in membrane protein trafficking. This Homo sapiens (Human) protein is Secretory carrier-associated membrane protein 4 (SCAMP4).